Reading from the N-terminus, the 184-residue chain is Peptidyl-tRNA hydrolase (184 aa).

Tyr13 provides a ligand contact to tRNA. His18 (proton acceptor) is an active-site residue. Positions 59, 61, and 105 each coordinate tRNA.

It belongs to the PTH family. Monomer.

It is found in the cytoplasm. The enzyme catalyses an N-acyl-L-alpha-aminoacyl-tRNA + H2O = an N-acyl-L-amino acid + a tRNA + H(+). Hydrolyzes ribosome-free peptidyl-tRNAs (with 1 or more amino acids incorporated), which drop off the ribosome during protein synthesis, or as a result of ribosome stalling. Functionally, catalyzes the release of premature peptidyl moieties from peptidyl-tRNA molecules trapped in stalled 50S ribosomal subunits, and thus maintains levels of free tRNAs and 50S ribosomes. The polypeptide is Peptidyl-tRNA hydrolase (Sulfurimonas denitrificans (strain ATCC 33889 / DSM 1251) (Thiomicrospira denitrificans (strain ATCC 33889 / DSM 1251))).